We begin with the raw amino-acid sequence, 181 residues long: MAQDSNNLIWIDMEMTGLNPGTDRIIEVALVVTDAQLNTLAEAPVLVVHQPDDILNGMDKWNQSTHGKSGLIDKVKTSILSEAEVESRMLAFLELHVPAGTSPMCGNSICQDRRFLARSMPKLESYFHYRNLDVSTLKELAKRWKPEITQGFNKQGKHEALADIYDSIEELKYYRQHLFNI.

Positions 8 to 171 (LIWIDMEMTG…ADIYDSIEEL (164 aa)) constitute an Exonuclease domain. The active site involves Tyr129.

The protein belongs to the oligoribonuclease family.

The protein localises to the cytoplasm. Functionally, 3'-to-5' exoribonuclease specific for small oligoribonucleotides. The protein is Oligoribonuclease of Nitrosomonas europaea (strain ATCC 19718 / CIP 103999 / KCTC 2705 / NBRC 14298).